The following is a 161-amino-acid chain: Ribonuclease P protein component 2 (161 aa).

Belongs to the eukaryotic/archaeal RNase P protein component 2 family. As to quaternary structure, consists of a catalytic RNA component and at least 4-5 protein subunits.

The protein localises to the cytoplasm. The catalysed reaction is Endonucleolytic cleavage of RNA, removing 5'-extranucleotides from tRNA precursor.. Part of ribonuclease P, a protein complex that generates mature tRNA molecules by cleaving their 5'-ends. The polypeptide is Ribonuclease P protein component 2 (Methanopyrus kandleri (strain AV19 / DSM 6324 / JCM 9639 / NBRC 100938)).